A 477-amino-acid polypeptide reads, in one-letter code: MEKHLPLIVNGQIISTEENRFEISFEEKKVKIDSFNNLHLTQMVNHDYLNDLNINNIINFLYTTGQRWKSEEYSRRRAYIRSLITYLGYSPQMAKLEANWIAMILCSKSALYDIIDTELGSTHIQDEWLPQGECYVRAFPKGRTMHLLAGNVPLSGVTSILRGILTRNQCIVRMSASDPFTAHALAMSFIDVDPNHPISRSISVLYWPHASDTTLAEELLSHMDAVVAWGGRDAIDWAVKHSPSHIDVLKFGPKKSFTVLDHPADLEEAASGVAHDICFYDQNACFSTQNIYFSGDKYEEFKLKLVEKLNLYQEVLPKSKQSFDDEALFSMTRLECQFSGLKVISEPENNWMIIESEPGVEYNHPLSRCVYVHKINKVDDVVQYIEKHQTQTISFYPWESSKKYRDAFAAKGVERIVESGMNNIFRAGGAHDAMRPLQRLVRFVSHERPYNFTTKDVSVEIEQTRFLEEDKFLVFVP.

The protein belongs to the LuxC family.

It carries out the reaction a long-chain fatty aldehyde + NADP(+) + CoA = a long-chain fatty acyl-CoA + NADPH + H(+). It participates in lipid metabolism; fatty acid reduction for biolumincescence. Its function is as follows. LuxC is the fatty acid reductase enzyme responsible for synthesis of the aldehyde substrate for the luminescent reaction catalyzed by luciferase. The chain is Long-chain acyl-protein thioester reductase (luxC) from Vibrio harveyi (Beneckea harveyi).